We begin with the raw amino-acid sequence, 954 residues long: Glycine dehydrogenase (decarboxylating) (954 aa).

Lys-700 carries the post-translational modification N6-(pyridoxal phosphate)lysine.

The protein belongs to the GcvP family. As to quaternary structure, the glycine cleavage system is composed of four proteins: P, T, L and H. Requires pyridoxal 5'-phosphate as cofactor.

The enzyme catalyses N(6)-[(R)-lipoyl]-L-lysyl-[glycine-cleavage complex H protein] + glycine + H(+) = N(6)-[(R)-S(8)-aminomethyldihydrolipoyl]-L-lysyl-[glycine-cleavage complex H protein] + CO2. Functionally, the glycine cleavage system catalyzes the degradation of glycine. The P protein binds the alpha-amino group of glycine through its pyridoxal phosphate cofactor; CO(2) is released and the remaining methylamine moiety is then transferred to the lipoamide cofactor of the H protein. This is Glycine dehydrogenase (decarboxylating) from Dinoroseobacter shibae (strain DSM 16493 / NCIMB 14021 / DFL 12).